Reading from the N-terminus, the 180-residue chain is Protein GrpE (180 aa).

Residues 1 to 19 show a composition bias toward basic and acidic residues; that stretch reads MAEKKRAQEQEKVQEDQKM. A disordered region spans residues 1–25; it reads MAEKKRAQEQEKVQEDQKMQNEQNE.

It belongs to the GrpE family. In terms of assembly, homodimer.

The protein localises to the cytoplasm. In terms of biological role, participates actively in the response to hyperosmotic and heat shock by preventing the aggregation of stress-denatured proteins, in association with DnaK and GrpE. It is the nucleotide exchange factor for DnaK and may function as a thermosensor. Unfolded proteins bind initially to DnaJ; upon interaction with the DnaJ-bound protein, DnaK hydrolyzes its bound ATP, resulting in the formation of a stable complex. GrpE releases ADP from DnaK; ATP binding to DnaK triggers the release of the substrate protein, thus completing the reaction cycle. Several rounds of ATP-dependent interactions between DnaJ, DnaK and GrpE are required for fully efficient folding. This is Protein GrpE from Nitratiruptor sp. (strain SB155-2).